Here is a 1956-residue protein sequence, read N- to C-terminus: Sodium channel protein type 10 subunit alpha (1956 aa).

At 1–125 (MELPFASVGT…FNLIRRTAIK (125 aa)) the chain is on the cytoplasmic side. The segment at 31-54 (HRAAKKARTKHRGQEDKGEKPRPQ) is disordered. Over residues 32–41 (RAAKKARTKH) the composition is skewed to basic residues. The span at 42–54 (RGQEDKGEKPRPQ) shows a compositional bias: basic and acidic residues. One copy of the I repeat lies at 116–404 (FNLIRRTAIK…VTMAYEEQSQ (289 aa)). A helical membrane pass occupies residues 126–149 (VSVHSWFSIFITITILVNCVCMTR). At 150-154 (TDLPE) the chain is on the extracellular side. Residues 155–174 (KVEYVFTVIYTFEALIKILA) form a helical membrane-spanning segment. Residues 175-187 (RGFCLNEFTYLRD) lie on the Cytoplasmic side of the membrane. The helical transmembrane segment at 188–206 (PWNWLDFSVITLAYVGAAI) threads the bilayer. Over 207-212 (DLRGIS) the chain is Extracellular. Residues 213–232 (GLRTFRVLRALKTVSVIPGL) traverse the membrane as a helical; Voltage-sensor segment. Over 233-248 (KVIVGALIHSVRKLAD) the chain is Cytoplasmic. The helical transmembrane segment at 249 to 272 (VTILTVFCLSVFALVGLQLFKGNL) threads the bilayer. Residues 273 to 340 (KNKCIRNGTD…PDFNYTSFDS (68 aa)) lie on the Extracellular side of the membrane. Cysteines 276 and 318 form a disulfide. N-linked (GlcNAc...) asparagine glycosylation is found at asparagine 279, asparagine 288, asparagine 311, and asparagine 334. Positions 341 to 365 (FAWAFLSLFRLMTQDSWERLYQQTL) form an intramembrane region, pore-forming. Topologically, residues 366–372 (RASGKMY) are extracellular. Residues 373-398 (MVFFVLVIFLGSFYLVNLILAVVTMA) form a helical membrane-spanning segment. Over 399–658 (YEEQSQATIA…KWRKFKMALF (260 aa)) the chain is Cytoplasmic. Phosphoserine is present on residues serine 440, serine 443, serine 466, and serine 478. Positions 441–453 (LQSHSGSPLASKN) are enriched in polar residues. Disordered stretches follow at residues 441–484 (LQSH…YNQR) and 537–581 (LLGR…AGAP). Positions 475–484 (SPQSDPYNQR) are enriched in polar residues. Residues serine 611 and serine 614 each carry the phosphoserine modification. The stretch at 646–910 (CCPKWRKFKM…EDDGEVNNLQ (265 aa)) is one II repeat. A helical transmembrane segment spans residues 659-683 (ELVTDPFAELTITLCIVVNTVFMAM). At 684–694 (EHYPMTDAFDA) the chain is on the extracellular side. The helical transmembrane segment at 695–718 (MLQAGNIVFTVFFTMEMAFKIIAF) threads the bilayer. Over 719 to 726 (DPYYYFQK) the chain is Cytoplasmic. Residues 727–746 (KWNIFDCVIVTVSLLELSAS) form a helical membrane-spanning segment. Over 747–752 (KKGSLS) the chain is Extracellular. Residues 753 to 772 (VLRTFRLLRVFKLAKSWPTL) form a helical; Voltage-sensor membrane-spanning segment. Over 773–788 (NTLIKIIGNSVGALGN) the chain is Cytoplasmic. A helical membrane pass occupies residues 789–809 (LTFILAIIVFIFALVGKQLLS). Residues 810 to 833 (EDYGCRKDGVSVWNGEKLRWHMCD) are Extracellular-facing. The segment at residues 834–854 (FFHSFLVVFRILCGEWIENMW) is an intramembrane region (pore-forming). The Extracellular segment spans residues 855–863 (VCMEVSQKS). A disulfide bridge links cysteine 856 with cysteine 865. Residues 864-889 (ICLILFLTVMVLGNLVVLNLFIALLL) form a helical membrane-spanning segment. The Cytoplasmic segment spans residues 890–1148 (NSFSADNLTA…GWQVRKTCYR (259 aa)). Residues 1008–1094 (DELEEDMEQA…SEGSTVDCPD (87 aa)) form a disordered region. Residues 1141–1450 (QVRKTCYRIV…KKYYNAMKKL (310 aa)) form an III repeat. A helical membrane pass occupies residues 1149-1172 (IVEHSWFESFIIFMILLSSGALAF). At 1173–1185 (EDNYLEEKPRVKS) the chain is on the extracellular side. A helical transmembrane segment spans residues 1186–1211 (VLEYTDRVFTFIFVFEMLLKWVAYGF). Topologically, residues 1212 to 1217 (KKYFTN) are cytoplasmic. A helical membrane pass occupies residues 1218 to 1239 (AWCWLDFLIVNISLTSLIAKIL). The Extracellular segment spans residues 1240-1243 (EYSD). The chain crosses the membrane as a helical; Voltage-sensor span at residues 1244 to 1265 (VASIKALRTLRALRPLRALSRF). Residues 1266–1284 (EGMRVVVDALVGAIPSIMN) are Cytoplasmic-facing. A helical membrane pass occupies residues 1285 to 1312 (VLLVCLIFWLIFSIMGVNLFAGKFSKCV). Over 1313–1354 (DTRNNPFSNVNSTMVNNKSECHNQNSTGHFFWVNVKVNFDNV) the chain is Extracellular. N-linked (GlcNAc...) asparagine glycans are attached at residues asparagine 1323, asparagine 1329, and asparagine 1337. The segment at residues 1355–1376 (AMGYLALLQVATFKGWMDIMYA) is an intramembrane region (pore-forming). Topologically, residues 1377–1392 (AVDSGEINSQPNWENN) are extracellular. Residues 1393 to 1419 (LYMYLYFVVFIIFGGFFTLNLFVGVII) traverse the membrane as a helical segment. At 1420–1472 (DNFNQQKKKLGGQDIFMTEEQKKYYNAMKKLGSKKPQKPIPRPLNKYQGFVFD) the chain is on the cytoplasmic side. Serine 1452 bears the Phosphoserine; by PKC mark. One copy of the IV repeat lies at 1459–1758 (IPRPLNKYQG…WEKFDPEATQ (300 aa)). A helical membrane pass occupies residues 1473–1496 (IVTRQAFDIIIMVLICLNMITMMV). Residues 1497–1507 (ETDEQGEEKTK) lie on the Extracellular side of the membrane. Residues 1508 to 1531 (VLGRINQFFVAVFTGECVMKMFAL) traverse the membrane as a helical segment. Residues 1532-1537 (RQYYFT) are Cytoplasmic-facing. Residues 1538–1561 (NGWNVFDFIVVILSIGSLLFSAIL) form a helical membrane-spanning segment. Topologically, residues 1562–1573 (KSLENYFSPTLF) are extracellular. A helical; Voltage-sensor membrane pass occupies residues 1574 to 1595 (RVIRLARIGRILRLIRAAKGIR). The Cytoplasmic portion of the chain corresponds to 1596 to 1610 (TLLFALMMSLPALFN). Residues 1611–1633 (IGLLLFLVMFIYSIFGMASFANV) traverse the membrane as a helical segment. At 1634–1647 (VDEAGIDDMFNFKT) the chain is on the extracellular side. Positions 1648–1670 (FGNSMLCLFQITTSAGWDGLLSP) form an intramembrane region, pore-forming. Over 1671–1698 (ILNTGPPYCDPNLPNSNGSRGNCGSPAV) the chain is Extracellular. Residue asparagine 1687 is glycosylated (N-linked (GlcNAc...) asparagine). The helical transmembrane segment at 1699 to 1723 (GIIFFTTYIIISFLIVVNMYIAVIL) threads the bilayer. Residues 1724 to 1956 (ENFNVATEES…AKEGNSPGPQ (233 aa)) lie on the Cytoplasmic side of the membrane. The IQ domain maps to 1852–1881 (EDLSATVIQKAYRSYMLHRSLTLSNTLHVP). Residues 1906-1956 (DKSETASATSFPPSYDSVTRGLSDRANINPSSSMQNEDEVAAKEGNSPGPQ) are disordered. The segment covering 1931-1940 (ANINPSSSMQ) has biased composition (polar residues).

This sequence belongs to the sodium channel (TC 1.A.1.10) family. Nav1.8/SCN10A subfamily. In terms of assembly, the channel consists of an ion conducting pore forming alpha-subunit regulated by one or more associated auxiliary subunits SCN1B, SCN2B and SCN3B; electrophysiological properties may vary depending on the type of the associated beta subunits. Found in a number of complexes with PRX, DYNLT1 and PDZD2. Interacts with proteins such as FSTL1, PRX, DYNLT1, PDZD2, S100A10 and many others. Interacts with NEDD4 and NEDD4L. In terms of processing, ubiquitinated by NEDD4L; which promotes its endocytosis. Phosphorylation at Ser-1452 by PKC in a highly conserved cytoplasmic loop slows inactivation of the sodium channel and reduces peak sodium currents. Post-translationally, lacks the cysteine which covalently binds the conotoxin GVIIJ. This cysteine (position 815) is speculated in other sodium channel subunits alpha to be implied in covalent binding with the sodium channel subunit beta-2 or beta-4. In terms of tissue distribution, expressed in dorsal root ganglia, trigeminal ganglia, nodose ganglia and sciatic nerve.

It is found in the cell membrane. The enzyme catalyses Na(+)(in) = Na(+)(out). Tetrodotoxin-resistant channel that mediates the voltage-dependent sodium ion permeability of excitable membranes. Assuming opened or closed conformations in response to the voltage difference across the membrane, the protein forms a sodium-selective channel through which sodium ions may pass in accordance with their electrochemical gradient. Plays a role in neuropathic pain mechanisms. The protein is Sodium channel protein type 10 subunit alpha of Rattus norvegicus (Rat).